Consider the following 308-residue polypeptide: Glycine-rich protein GRP33 (308 aa).

Residues 83-118 (DQFPKYNFLGKLLGPGGSTMKQLQDETMTKISILGR) enclose the KH domain. Gly residues-rich tracts occupy residues 203–220 (GPMGPQGRGRGRGRGGFS) and 273–294 (RGAGAGARGARGGLDQSRGGGK). Disordered stretches follow at residues 203-222 (GPMGPQGRGRGRGRGGFSGP) and 270-308 (SPGRGAGAGARGARGGLDQSRGGGKFPSARGGRGRAAPY).

The arginines in the Gly-rich domain might be methylated.

The protein is Glycine-rich protein GRP33 of Artemia salina (Brine shrimp).